Consider the following 144-residue polypeptide: Large ribosomal subunit protein uL15 (144 aa).

A disordered region spans residues 1-57 (MKLNDLSPAPGSRREKHRPGRGIGSGLGKTGGRGHKGQTSRSGGSIAPGFEGGQQPL). A compositionally biased stretch (gly residues) spans 21-31 (RGIGSGLGKTG).

This sequence belongs to the universal ribosomal protein uL15 family. Part of the 50S ribosomal subunit.

Functionally, binds to the 23S rRNA. The chain is Large ribosomal subunit protein uL15 from Pseudomonas entomophila (strain L48).